Consider the following 553-residue polypeptide: Putative transport protein YidE (553 aa).

5 consecutive transmembrane segments (helical) span residues 4–24 (IALT…IGNV), 28–48 (GIGL…HFVS), 65–85 (FGLI…FFAS), 95–115 (LFAV…HKLF), and 158–178 (MSYA…MWML). 2 consecutive RCK C-terminal domains span residues 191–276 (QQHE…VIGQ) and 279–361 (DTSL…VLGN). Helical transmembrane passes span 371–391 (MLPV…PVFV), 393–413 (GFPA…ALIL), 439–459 (IVLF…NTLV), 464–484 (LSWI…VGIL), 493–513 (YLTM…LAFA), and 533–553 (LVMF…WSIG).

The protein belongs to the AAE transporter (TC 2.A.81) family. YidE subfamily.

The protein localises to the cell membrane. The sequence is that of Putative transport protein YidE from Shigella flexneri serotype 5b (strain 8401).